A 126-amino-acid chain; its full sequence is Large ribosomal subunit protein bL17 (126 aa).

Belongs to the bacterial ribosomal protein bL17 family. In terms of assembly, part of the 50S ribosomal subunit. Contacts protein L32.

This chain is Large ribosomal subunit protein bL17, found in Aliivibrio fischeri (strain ATCC 700601 / ES114) (Vibrio fischeri).